A 129-amino-acid polypeptide reads, in one-letter code: Prefoldin subunit alpha (129 aa).

Belongs to the prefoldin alpha subunit family. As to quaternary structure, heterohexamer of two alpha and four beta subunits.

The protein resides in the cytoplasm. Functionally, molecular chaperone capable of stabilizing a range of proteins. Seems to fulfill an ATP-independent, HSP70-like function in archaeal de novo protein folding. The chain is Prefoldin subunit alpha from Thermofilum pendens (strain DSM 2475 / Hrk 5).